Consider the following 324-residue polypeptide: NADH-ubiquinone oxidoreductase chain 1 (324 aa).

The next 8 membrane-spanning stretches (helical) occupy residues 9–29, 76–96, 106–126, 146–166, 177–197, 228–248, 259–279, and 299–319; these read LINPLAYIVPVLLAVAFLTLL, LFLVTPMLALTLAMTLWAPMP, LGVLFILALSSLAVYSILGSG, ISYEVSLGLILRSIIIFWGGY, ALWLLLPACPLAAMWYISTLA, LLFLAEYANILLMNTLSAILF, ELTTINLMTKAALLSVVFLWV, and FLPLTLALVLWHTALPIAFAG.

It belongs to the complex I subunit 1 family.

The protein localises to the mitochondrion inner membrane. The enzyme catalyses a ubiquinone + NADH + 5 H(+)(in) = a ubiquinol + NAD(+) + 4 H(+)(out). Functionally, core subunit of the mitochondrial membrane respiratory chain NADH dehydrogenase (Complex I) that is believed to belong to the minimal assembly required for catalysis. Complex I functions in the transfer of electrons from NADH to the respiratory chain. The immediate electron acceptor for the enzyme is believed to be ubiquinone. The chain is NADH-ubiquinone oxidoreductase chain 1 (MT-ND1) from Formosania lacustris (Oriental stream loach).